Here is a 214-residue protein sequence, read N- to C-terminus: Holliday junction branch migration complex subunit RuvA (214 aa).

The domain I stretch occupies residues 1–63 (MISFLRGPVA…EDSMTLYGFA (63 aa)). The tract at residues 64–139 (DPDEREVFEI…KLVPHGTVNG (76 aa)) is domain II. The interval 139–143 (GAPAS) is flexible linker. The tract at residues 144–214 (PSAQWKPQVV…SAGRQVTARG (71 aa)) is domain III.

The protein belongs to the RuvA family. As to quaternary structure, homotetramer. Forms an RuvA(8)-RuvB(12)-Holliday junction (HJ) complex. HJ DNA is sandwiched between 2 RuvA tetramers; dsDNA enters through RuvA and exits via RuvB. An RuvB hexamer assembles on each DNA strand where it exits the tetramer. Each RuvB hexamer is contacted by two RuvA subunits (via domain III) on 2 adjacent RuvB subunits; this complex drives branch migration. In the full resolvosome a probable DNA-RuvA(4)-RuvB(12)-RuvC(2) complex forms which resolves the HJ.

It is found in the cytoplasm. In terms of biological role, the RuvA-RuvB-RuvC complex processes Holliday junction (HJ) DNA during genetic recombination and DNA repair, while the RuvA-RuvB complex plays an important role in the rescue of blocked DNA replication forks via replication fork reversal (RFR). RuvA specifically binds to HJ cruciform DNA, conferring on it an open structure. The RuvB hexamer acts as an ATP-dependent pump, pulling dsDNA into and through the RuvAB complex. HJ branch migration allows RuvC to scan DNA until it finds its consensus sequence, where it cleaves and resolves the cruciform DNA. The polypeptide is Holliday junction branch migration complex subunit RuvA (Renibacterium salmoninarum (strain ATCC 33209 / DSM 20767 / JCM 11484 / NBRC 15589 / NCIMB 2235)).